A 444-amino-acid chain; its full sequence is CCA-adding enzyme (444 aa).

Positions 57 and 60 each coordinate ATP. Residues serine 57 and arginine 60 each contribute to the CTP site. Positions 69, 71, and 124 each coordinate Mg(2+). 3 residues coordinate ATP: histidine 147, lysine 168, and tyrosine 177. CTP contacts are provided by histidine 147, lysine 168, and tyrosine 177.

This sequence belongs to the tRNA nucleotidyltransferase/poly(A) polymerase family. Archaeal CCA-adding enzyme subfamily. In terms of assembly, homodimer. Mg(2+) serves as cofactor.

The enzyme catalyses a tRNA precursor + 2 CTP + ATP = a tRNA with a 3' CCA end + 3 diphosphate. It carries out the reaction a tRNA with a 3' CCA end + 2 CTP + ATP = a tRNA with a 3' CCACCA end + 3 diphosphate. In terms of biological role, catalyzes the addition and repair of the essential 3'-terminal CCA sequence in tRNAs without using a nucleic acid template. Adds these three nucleotides in the order of C, C, and A to the tRNA nucleotide-73, using CTP and ATP as substrates and producing inorganic pyrophosphate. tRNA 3'-terminal CCA addition is required both for tRNA processing and repair. Also involved in tRNA surveillance by mediating tandem CCA addition to generate a CCACCA at the 3' terminus of unstable tRNAs. While stable tRNAs receive only 3'-terminal CCA, unstable tRNAs are marked with CCACCA and rapidly degraded. This is CCA-adding enzyme from Methanococcus maripaludis (strain DSM 14266 / JCM 13030 / NBRC 101832 / S2 / LL).